The chain runs to 552 residues: Non-structural protein NS1 (552 aa).

This sequence belongs to the orbivirus non-structural protein NS1 family.

The polypeptide is Non-structural protein NS1 (Segment-5) (Antilocapra americana (Pronghorn)).